A 286-amino-acid polypeptide reads, in one-letter code: uncharacterized protein (286 aa).

This sequence belongs to the methyltransferase superfamily.

Functionally, involved in osmoadaptation. This is an uncharacterized protein from Emericella nidulans (strain FGSC A4 / ATCC 38163 / CBS 112.46 / NRRL 194 / M139) (Aspergillus nidulans).